The sequence spans 353 residues: Phosphate acyltransferase (353 aa).

It belongs to the PlsX family. As to quaternary structure, homodimer. Probably interacts with PlsY.

It is found in the cytoplasm. The catalysed reaction is a fatty acyl-[ACP] + phosphate = an acyl phosphate + holo-[ACP]. Its pathway is lipid metabolism; phospholipid metabolism. In terms of biological role, catalyzes the reversible formation of acyl-phosphate (acyl-PO(4)) from acyl-[acyl-carrier-protein] (acyl-ACP). This enzyme utilizes acyl-ACP as fatty acyl donor, but not acyl-CoA. The chain is Phosphate acyltransferase from Myxococcus xanthus (strain DK1622).